The chain runs to 426 residues: Lipase 7 (426 aa).

An N-terminal signal peptide occupies residues 1–15 (MFVFLALITLTTCLQ). Residues Asn-74, Asn-175, and Asn-179 are each glycosylated (N-linked (GlcNAc...) asparagine). 2 cysteine pairs are disulfide-bonded: Cys-108–Cys-269 and Cys-341–Cys-385. The Charge relay system role is filled by Ser-190. Asn-223 carries N-linked (GlcNAc...) asparagine glycosylation. The Charge relay system role is filled by His-358. N-linked (GlcNAc...) asparagine glycans are attached at residues Asn-378, Asn-379, Asn-422, and Asn-423.

This sequence belongs to the AB hydrolase superfamily. Lipase family. Class Lip subfamily.

It carries out the reaction a triacylglycerol + H2O = a diacylglycerol + a fatty acid + H(+). In terms of biological role, secreted lipase that is able to hydrolze both the neutral triacylglycerols and the monopalmitate ester Tween 40, allowing the use of hydrolyzed products as carbon sources. Has broad lipolytic activity, which may be important for colonization and subsequent infection, therefore contributing to the persistence and virulence in human tissue. The sequence is that of Lipase 7 from Candida albicans (strain SC5314 / ATCC MYA-2876) (Yeast).